Consider the following 431-residue polypeptide: O-methyltransferase gliM (431 aa).

Residues 20–85 (EFKAIVNDLR…SMDKLQLQLV (66 aa)) are a coiled coil. S-adenosyl-L-methionine is bound by residues Asp287 and 319–321 (GDF). The active-site Proton acceptor is His338.

Belongs to the class I-like SAM-binding methyltransferase superfamily. Cation-independent O-methyltransferase family. COMT subfamily.

Its pathway is mycotoxin biosynthesis. Functionally, O-methyltransferase; part of the gene cluster that mediates the biosynthesis of gliotoxin, a member of the epipolythiodioxopiperazine (ETP) class of toxins characterized by a disulfide bridged cyclic dipeptide. The first step in gliotoxin biosynthesis is the condensation of serine and phenylalanine to form the cyclo-L-phenylalanyl-L-serine diketopiperazine (DKP) by the NRPS gliP. GliP is also able to produce the DKP cyclo-L-tryptophanyl-L-serine, suggesting that the substrate specificity of the first adenylation (A) domain in gliP is sufficiently relaxed to accommodate both L-Phe and L-Trp. The cytochrome P450 monooxygenase gliC has been shown to catalyze the subsequent hydroxylation of the alpha-carbon of L-Phe in cyclo-L-phenylalanyl-L-serine whereas the second cytochrome P450 enzyme, gliF, is presumably involved in the modification of the DKP side chain. The glutathione S-transferase (GST) gliG then forms a bis-glutathionylated biosynthetic intermediate which is responsible for the sulfurization of gliotoxin. This bis-glutathionylated intermediate is subsequently processed by the gamma-glutamyl cyclotransferase gliK to remove both gamma-glutamyl moieties. Subsequent processing via gliI yields a biosynthetic intermediate, which is N-methylated via the N-methyltransferase gliN, before the gliotoxin oxidoreductase gliT-mediated disulfide bridge closure. GliN-mediated amide methylation confers stability to ETP, damping the spontaneous formation of tri- and tetrasulfides. Intracellular dithiol gliotoxin oxidized by gliT is subsequently effluxed by gliA. Gliotoxin contributes to pathogenesis during invasive aspergillosis. In macrophages and neutrophils, gliotoxin showed inhibition of various different cell functions including cytokine production, antigen presentation, phagocytosis, and production of reactive oxygen species. This Aspergillus fumigatus (strain ATCC MYA-4609 / CBS 101355 / FGSC A1100 / Af293) (Neosartorya fumigata) protein is O-methyltransferase gliM.